Here is a 32-residue protein sequence, read N- to C-terminus: Photosystem II reaction center protein T (32 aa).

The helical transmembrane segment at 3 to 23 (ALVYTFLLIGTLMVIFFAVFF) threads the bilayer.

Belongs to the PsbT family. PSII is composed of 1 copy each of membrane proteins PsbA, PsbB, PsbC, PsbD, PsbE, PsbF, PsbH, PsbI, PsbJ, PsbK, PsbL, PsbM, PsbT, PsbX, PsbY, PsbZ, Psb30/Ycf12, at least 3 peripheral proteins of the oxygen-evolving complex and a large number of cofactors. It forms dimeric complexes.

It localises to the plastid. Its subcellular location is the chloroplast thylakoid membrane. Functionally, found at the monomer-monomer interface of the photosystem II (PS II) dimer, plays a role in assembly and dimerization of PSII. PSII is a light-driven water plastoquinone oxidoreductase, using light energy to abstract electrons from H(2)O, generating a proton gradient subsequently used for ATP formation. The chain is Photosystem II reaction center protein T from Thalassiosira pseudonana (Marine diatom).